The sequence spans 252 residues: tRNA (guanine-N(7)-)-methyltransferase (252 aa).

Glutamate 51, aspartate 76, asparagine 103, and aspartate 125 together coordinate S-adenosyl-L-methionine. Residue aspartate 125 is part of the active site. Residues lysine 129, aspartate 159, and 199–202 each bind substrate; that span reads TYYE.

The protein belongs to the class I-like SAM-binding methyltransferase superfamily. TrmB family.

It catalyses the reaction guanosine(46) in tRNA + S-adenosyl-L-methionine = N(7)-methylguanosine(46) in tRNA + S-adenosyl-L-homocysteine. It participates in tRNA modification; N(7)-methylguanine-tRNA biosynthesis. Functionally, catalyzes the formation of N(7)-methylguanine at position 46 (m7G46) in tRNA. The protein is tRNA (guanine-N(7)-)-methyltransferase of Bacteroides fragilis (strain YCH46).